Consider the following 233-residue polypeptide: Orotidine 5'-phosphate decarboxylase (233 aa).

Substrate-binding positions include Asp-11, Lys-34, Asp-61–Thr-70, Thr-117, Arg-179, Gln-188, Gly-208, and Arg-209. Residue Lys-63 is the Proton donor of the active site.

This sequence belongs to the OMP decarboxylase family. Type 1 subfamily. Homodimer.

It carries out the reaction orotidine 5'-phosphate + H(+) = UMP + CO2. The protein operates within pyrimidine metabolism; UMP biosynthesis via de novo pathway; UMP from orotate: step 2/2. Functionally, catalyzes the decarboxylation of orotidine 5'-monophosphate (OMP) to uridine 5'-monophosphate (UMP). The chain is Orotidine 5'-phosphate decarboxylase from Streptococcus pneumoniae (strain Hungary19A-6).